The sequence spans 461 residues: UDP-N-acetylmuramate--L-alanine ligase (461 aa).

111–117 lines the ATP pocket; the sequence is GAHGKTT.

It belongs to the MurCDEF family.

The protein resides in the cytoplasm. The catalysed reaction is UDP-N-acetyl-alpha-D-muramate + L-alanine + ATP = UDP-N-acetyl-alpha-D-muramoyl-L-alanine + ADP + phosphate + H(+). It functions in the pathway cell wall biogenesis; peptidoglycan biosynthesis. Its function is as follows. Cell wall formation. The sequence is that of UDP-N-acetylmuramate--L-alanine ligase from Pelotomaculum thermopropionicum (strain DSM 13744 / JCM 10971 / SI).